We begin with the raw amino-acid sequence, 329 residues long: ADP-L-glycero-D-manno-heptose-6-epimerase (329 aa).

NADP(+) contacts are provided by residues 10–11 (FI), 31–32 (DD), lysine 38, lysine 53, 74–78 (QGACS), and asparagine 91. The active-site Proton acceptor is tyrosine 138. Residue lysine 142 participates in NADP(+) binding. Asparagine 167 provides a ligand contact to substrate. NADP(+) contacts are provided by valine 168 and lysine 176. The active-site Proton acceptor is lysine 176. Substrate is bound by residues arginine 178, histidine 185, 199–202 (FAGW), arginine 212, and tyrosine 291.

It belongs to the NAD(P)-dependent epimerase/dehydratase family. HldD subfamily. In terms of assembly, homopentamer. Requires NADP(+) as cofactor.

It catalyses the reaction ADP-D-glycero-beta-D-manno-heptose = ADP-L-glycero-beta-D-manno-heptose. The protein operates within nucleotide-sugar biosynthesis; ADP-L-glycero-beta-D-manno-heptose biosynthesis; ADP-L-glycero-beta-D-manno-heptose from D-glycero-beta-D-manno-heptose 7-phosphate: step 4/4. Its pathway is bacterial outer membrane biogenesis; LPS core biosynthesis. In terms of biological role, catalyzes the interconversion between ADP-D-glycero-beta-D-manno-heptose and ADP-L-glycero-beta-D-manno-heptose via an epimerization at carbon 6 of the heptose. The chain is ADP-L-glycero-D-manno-heptose-6-epimerase from Bordetella parapertussis (strain 12822 / ATCC BAA-587 / NCTC 13253).